Consider the following 54-residue polypeptide: UPF0391 membrane protein Bpro_0879 (54 aa).

2 helical membrane passes run 6–26 and 30–50; these read VVFLVIALIAAIFGFGGIAAG and IAKILFFIFAIMAVVSFVMGL.

This sequence belongs to the UPF0391 family.

It is found in the cell membrane. This is UPF0391 membrane protein Bpro_0879 from Polaromonas sp. (strain JS666 / ATCC BAA-500).